The sequence spans 467 residues: Asparagine--tRNA ligase (467 aa).

This sequence belongs to the class-II aminoacyl-tRNA synthetase family. In terms of assembly, homodimer.

It localises to the cytoplasm. The enzyme catalyses tRNA(Asn) + L-asparagine + ATP = L-asparaginyl-tRNA(Asn) + AMP + diphosphate + H(+). The chain is Asparagine--tRNA ligase from Haemophilus influenzae (strain PittEE).